Reading from the N-terminus, the 24-residue chain is AVLDTALSGIDKVLHGSIDAHKAD.

In Liposcelis bostrychophila (Booklouse), this protein is Allergen Lip b 1.